A 130-amino-acid polypeptide reads, in one-letter code: Small ribosomal subunit protein uS9 (130 aa).

Belongs to the universal ribosomal protein uS9 family.

This is Small ribosomal subunit protein uS9 from Pseudomonas entomophila (strain L48).